A 484-amino-acid polypeptide reads, in one-letter code: Glutamyl-tRNA(Gln) amidotransferase subunit A (484 aa).

Catalysis depends on charge relay system residues Lys-74 and Ser-149. Ser-173 (acyl-ester intermediate) is an active-site residue.

The protein belongs to the amidase family. GatA subfamily. Heterotrimer of A, B and C subunits.

It catalyses the reaction L-glutamyl-tRNA(Gln) + L-glutamine + ATP + H2O = L-glutaminyl-tRNA(Gln) + L-glutamate + ADP + phosphate + H(+). Allows the formation of correctly charged Gln-tRNA(Gln) through the transamidation of misacylated Glu-tRNA(Gln) in organisms which lack glutaminyl-tRNA synthetase. The reaction takes place in the presence of glutamine and ATP through an activated gamma-phospho-Glu-tRNA(Gln). In Prochlorococcus marinus subsp. pastoris (strain CCMP1986 / NIES-2087 / MED4), this protein is Glutamyl-tRNA(Gln) amidotransferase subunit A.